Here is a 347-residue protein sequence, read N- to C-terminus: Haptoglobin (347 aa).

An N-terminal signal peptide occupies residues 1–18 (MRALGAVITLLLWGQLFA). The Sushi domain occupies 31-88 (DSCPKPPEIANGYVEHLVRYQCKNYYRLRTEGDGVYALNSEKQWVNKAVGEQLPECEA). 2 disulfides stabilise this stretch: C52–C86 and C90–C207. The Peptidase S1 domain maps to 103 to 345 (IIGGSLDAKG…ILDWIQKTIA (243 aa)). 5 N-linked (GlcNAc...) asparagine glycosylation sites follow: N148, N152, N182, N230, and N256. 2 disulfides stabilise this stretch: C250-C281 and C292-C322. Residues 259–264 (VPENKI) are interaction with CD163.

The protein belongs to the peptidase S1 family. Tetramer of two alpha and two beta chains; disulfide-linked. The hemoglobin/haptoglobin complex is composed of a haptoglobin dimer bound to two hemoglobin alpha-beta dimers. Interacts with CD163. Interacts with ERGIC3. In terms of tissue distribution, expressed by the liver and secreted in plasma.

The protein localises to the secreted. Its function is as follows. As a result of hemolysis, hemoglobin is found to accumulate in the kidney and is secreted in the urine. Haptoglobin captures, and combines with free plasma hemoglobin to allow hepatic recycling of heme iron and to prevent kidney damage. Haptoglobin also acts as an antioxidant, has antibacterial activity and plays a role in modulating many aspects of the acute phase response. Hemoglobin/haptoglobin complexes are rapidly cleared by the macrophage CD163 scavenger receptor expressed on the surface of liver Kupfer cells through an endocytic lysosomal degradation pathway. In Oryctolagus cuniculus (Rabbit), this protein is Haptoglobin (HP).